We begin with the raw amino-acid sequence, 532 residues long: Purple acid phosphatase 15 (532 aa).

An N-terminal signal peptide occupies residues 1–19 (MTFLLLLLFCFLSPAISSA). Residue N136 is glycosylated (N-linked (GlcNAc...) asparagine). Position 194 (D194) interacts with Fe cation. An N-linked (GlcNAc...) asparagine glycan is attached at N200. D221 and Y224 together coordinate Fe cation. D221 is a binding site for Zn(2+). 2 N-linked (GlcNAc...) asparagine glycosylation sites follow: N231 and N264. N277 contacts Zn(2+). Substrate is bound at residue N277. N286 and N301 each carry an N-linked (GlcNAc...) asparagine glycan. Residue H359 coordinates Zn(2+). The active-site Proton donor is H369. Residue H396 coordinates Zn(2+). Residue 396-398 (HVH) participates in substrate binding. A Fe cation-binding site is contributed by H398. N491 is a glycosylation site (N-linked (GlcNAc...) asparagine).

This sequence belongs to the metallophosphoesterase superfamily. Purple acid phosphatase family. In terms of assembly, homodimer. The cofactor is Fe cation. Zn(2+) serves as cofactor. As to expression, expressed in roots, stems, cotyledons, leaves, flowers and siliques.

It localises to the secreted. The enzyme catalyses 1D-myo-inositol hexakisphosphate + H2O = 1D-myo-inositol 1,2,3,5,6-pentakisphosphate + phosphate. It carries out the reaction a phosphate monoester + H2O = an alcohol + phosphate. In terms of biological role, acid phosphatase activity with p-nitrophenyl phosphate (pNPP), D-myoinositol 1-phosphate (Ins(1)P1), phytic acid and Myo-inositol hexakisphosphate. Low or no activity with Glc-6-P and ATP. Confers shoot growth stimulation, enhanced salt and osmotic stress tolerance, and ABA insensitivity. May modulate ascorbic acid (AsA) levels by controlling the input of myoinositol into this branch of AsA biosynthesis. This chain is Purple acid phosphatase 15 (PAP15), found in Arabidopsis thaliana (Mouse-ear cress).